Consider the following 318-residue polypeptide: Ankyrin repeat and SOCS box protein 7 (318 aa).

7 ANK repeats span residues 13 to 42 (QEEL…SPNG), 46 to 75 (NGWT…DPTV), 80 to 109 (GGFT…RSDI), 116 to 145 (DGWT…EVDP), 149 to 178 (KGTT…NIDI), 180 to 208 (NGFL…DTNL), and 213 to 242 (DGQT…DTNT). In terms of domain architecture, SOCS box spans 265–318 (LDFLQDVTRQPRTLQDLCRIKIRQCIGLQNLKLLDELPIAKVMKDYLKHKFDDI).

Belongs to the ankyrin SOCS box (ASB) family. Interacts with CUL5. Interacts with RNF7. Interacts with PSRC1.

The protein localises to the nucleus. Its subcellular location is the cytoplasm. Its pathway is protein modification; protein ubiquitination. In terms of biological role, probable substrate-recognition component of a SCF-like ECS (Elongin-Cullin-SOCS-box protein) E3 ubiquitin-protein ligase complex which mediates the ubiquitination and subsequent proteasomal degradation of target proteins. Plays a role in spindle dynamics and genome integrity by targeting the mitotic progression protein PSRC1 for proteasomal degradation in a cell cycle-dependent manner. Also participates in meiosis by mediating the proper attachment between kinetochores and microtubules. This chain is Ankyrin repeat and SOCS box protein 7 (Asb7), found in Mus musculus (Mouse).